The sequence spans 184 residues: Photosystem I assembly protein Ycf4 (184 aa).

2 consecutive transmembrane segments (helical) span residues 22–42 and 57–77; these read FCWA…GTSS and IVFF…LFIS.

It belongs to the Ycf4 family.

Its subcellular location is the plastid. The protein localises to the chloroplast thylakoid membrane. Seems to be required for the assembly of the photosystem I complex. The sequence is that of Photosystem I assembly protein Ycf4 from Helianthus annuus (Common sunflower).